The sequence spans 345 residues: Protein RecA (345 aa).

Residue 65–72 (GPESSGKT) coordinates ATP.

It belongs to the RecA family.

It is found in the cytoplasm. Can catalyze the hydrolysis of ATP in the presence of single-stranded DNA, the ATP-dependent uptake of single-stranded DNA by duplex DNA, and the ATP-dependent hybridization of homologous single-stranded DNAs. It interacts with LexA causing its activation and leading to its autocatalytic cleavage. The protein is Protein RecA of Stenotrophomonas maltophilia (strain R551-3).